Reading from the N-terminus, the 235-residue chain is 2-C-methyl-D-erythritol 4-phosphate cytidylyltransferase (235 aa).

The protein belongs to the IspD/TarI cytidylyltransferase family. IspD subfamily.

It carries out the reaction 2-C-methyl-D-erythritol 4-phosphate + CTP + H(+) = 4-CDP-2-C-methyl-D-erythritol + diphosphate. It functions in the pathway isoprenoid biosynthesis; isopentenyl diphosphate biosynthesis via DXP pathway; isopentenyl diphosphate from 1-deoxy-D-xylulose 5-phosphate: step 2/6. In terms of biological role, catalyzes the formation of 4-diphosphocytidyl-2-C-methyl-D-erythritol from CTP and 2-C-methyl-D-erythritol 4-phosphate (MEP). The chain is 2-C-methyl-D-erythritol 4-phosphate cytidylyltransferase from Synechococcus sp. (strain JA-3-3Ab) (Cyanobacteria bacterium Yellowstone A-Prime).